A 176-amino-acid polypeptide reads, in one-letter code: Protein KleF (176 aa).

The polypeptide is Protein KleF (kleF) (Escherichia coli).